The following is a 270-amino-acid chain: tRNA pseudouridine synthase A (270 aa).

Asp-60 (nucleophile) is an active-site residue. The RNA binding stretch occupies residues 107-111 (FHARF). Substrate is bound at residue Tyr-118. The tract at residues 168–172 (QCQSR) is interaction with tRNA.

Belongs to the tRNA pseudouridine synthase TruA family. As to quaternary structure, homodimer.

It carries out the reaction uridine(38/39/40) in tRNA = pseudouridine(38/39/40) in tRNA. Formation of pseudouridine at positions 38, 39 and 40 in the anticodon stem and loop of transfer RNAs. The chain is tRNA pseudouridine synthase A from Escherichia coli O9:H4 (strain HS).